A 95-amino-acid polypeptide reads, in one-letter code: Acylphosphatase (95 aa).

The region spanning 10-95 (CIHATVSGKV…VEDYSDFRVR (86 aa)) is the Acylphosphatase-like domain. Active-site residues include R25 and N43.

It belongs to the acylphosphatase family.

It catalyses the reaction an acyl phosphate + H2O = a carboxylate + phosphate + H(+). The sequence is that of Acylphosphatase (acyP) from Coxiella burnetii (strain Dugway 5J108-111).